The chain runs to 662 residues: Aprataxin-like protein (662 aa).

The region spanning 4-108 is the HIT domain; it reads SSALIKDISK…ISKDFVSTSL (105 aa). The C2H2-type zinc finger occupies 381-403; it reads LRCNQCEFVTNMLLDLKAHLYQH. Residues 482–662 form a disordered region; sequence KNINGPSVNM…PAPPSNSKPS (181 aa). Residues 490–500 are compositionally biased toward low complexity; sequence NMMNQNNPNNP. Composition is skewed to polar residues over residues 501-513 and 560-569; these read FRNT…QSQK and GHQQFPNASS. Residues 570 to 582 are compositionally biased toward gly residues; sequence VGGGQTGLPGQGQ. Polar residues predominate over residues 588 to 599; it reads WNSNKIFNQQNR. Over residues 600–626 the composition is skewed to low complexity; sequence QNTVQAQPQAQNQQTNQQQIQNSNKNQ. Over residues 653-662 the composition is skewed to pro residues; the sequence is PAPPSNSKPS.

The protein localises to the nucleus. In terms of biological role, DNA-binding protein involved in single-strand DNA break repair, double-strand DNA break repair and base excision repair. Resolves abortive DNA ligation intermediates formed either at base excision sites, or when DNA ligases attempt to repair non-ligatable breaks induced by reactive oxygen species. Catalyzes the release of adenylate groups covalently linked to 5'-phosphate termini, resulting in the production of 5'-phosphate termini that can be efficiently rejoined. This chain is Aprataxin-like protein, found in Drosophila melanogaster (Fruit fly).